Reading from the N-terminus, the 194-residue chain is Fimbrial protein 987P (194 aa).

Residues 1-23 (MRMKKSALTLAVLSSLFSGYSLA) form the signal peptide. The cysteines at positions 46 and 85 are disulfide-linked.

Belongs to the fimbrial protein family.

The protein resides in the fimbrium. This is Fimbrial protein 987P (fasA) from Escherichia coli.